A 557-amino-acid chain; its full sequence is Nucleoporin AMO1 (557 aa).

The C3H1-type zinc finger occupies 1–25 (MTVCRFWQQGYCRNGNACKFEHPPK). A coiled-coil region spans residues 114 to 141 (QGALNEIQAAYQAAQQQIQNTLQNIPAA). A disordered region spans residues 161–297 (ESSKGSSTGG…SALGPKPGAF (137 aa)). 10 SXFG repeats span residues 171 to 174 (SVFG), 200 to 203 (SAFG), 213 to 216 (SAFG), 228 to 231 (SAFG), 240 to 243 (SAFG), 249 to 252 (STFG), 262 to 265 (SAFG), 282 to 285 (SAFG), 303 to 306 (SAFG), and 314 to 317 (SPFG). Residues 195-215 (STPSTSAFGQPSPLGQKSSAF) are compositionally biased toward polar residues. Positions 243-253 (GSPQTGSTFGQ) are enriched in polar residues. The tract at residues 315–463 (PFGAAAQATQ…DLLSYATKNP (149 aa)) is disordered. Composition is skewed to polar residues over residues 321–338 (QATQ…QAAN) and 351–366 (GQPS…GQPS). SXFG repeat units follow at residues 348–351 (SAFG), 370–373 (SAFG), 387–390 (SLFG), and 407–410 (SAFG). Positions 367–385 (TQSSAFGQQQPQQAGTFGS) are enriched in low complexity. Residues 388–429 (LFGQQQQQPSNVFGQPSTTSAFGSQAATSGFSQLGNATSTIG) show a composition bias toward polar residues. The span at 430-443 (ASPAGAQAPASKSP) shows a compositional bias: low complexity.

The nuclear pore complex (NPC) constitutes the exclusive means of nucleocytoplasmic transport. NPCs allow the passive diffusion of ions and small molecules and the active, nuclear transport receptor-mediated bidirectional transport of macromolecules such as proteins, RNAs, ribonucleoparticles (RNPs), and ribosomal subunits across the nuclear envelope. The 55-60 MDa NPC is composed of at least 28 different subunits: AMO1, ELYS, GLE1, GLE2, MLP1, NDC1, NIC96, NSP1, NUP133, NUP145, NUP152, NUP159, NUP170, NUP188, NUP192, NUP37, NUP49, NUP53, NUP56, NUP57, NUP82, NUP84, NUP85, POM152, POM33, POM34, SEC13 and SEH1. Due to its 8-fold rotational symmetry, all subunits are present with 8 copies or multiples thereof.

It is found in the nucleus. Its subcellular location is the nuclear pore complex. The protein resides in the nucleus membrane. In terms of biological role, functions as a component of the nuclear pore complex (NPC). NPC components, collectively referred to as nucleoporins (NUPs), can play the role of both NPC structural components and of docking or interaction partners for transiently associated nuclear transport factors. Active directional transport is assured by both, a Phe-Gly (FG) repeat affinity gradient for these transport factors across the NPC and a transport cofactor concentration gradient across the nuclear envelope (GSP1 and GSP2 GTPases associated predominantly with GTP in the nucleus, with GDP in the cytoplasm). AMO1 is specifically important for nuclear protein and mRNA export. The polypeptide is Nucleoporin AMO1 (AMO1) (Chaetomium thermophilum (strain DSM 1495 / CBS 144.50 / IMI 039719) (Thermochaetoides thermophila)).